The following is a 126-amino-acid chain: Glycine cleavage system H protein (126 aa).

Residues 22-104 (VATIGITEYA…YEKAWMVKVE (83 aa)) form the Lipoyl-binding domain. N6-lipoyllysine is present on lysine 63.

Belongs to the GcvH family. The glycine cleavage system is composed of four proteins: P, T, L and H. It depends on (R)-lipoate as a cofactor.

Its function is as follows. The glycine cleavage system catalyzes the degradation of glycine. The H protein shuttles the methylamine group of glycine from the P protein to the T protein. In terms of biological role, is also involved in protein lipoylation via its role as an octanoyl/lipoyl carrier protein intermediate. The polypeptide is Glycine cleavage system H protein (Staphylococcus aureus (strain JH1)).